The primary structure comprises 152 residues: SKP1-like protein 12 (152 aa).

The tract at residues 94-152 is interaction with the F-box domain of F-box proteins; that stretch reads ILAANYLNIKSLFDLTCQTVADMIKGKTPEEIRSTFNIENDFTPEEEEAVRKENQWAFE.

It belongs to the SKP1 family. In terms of assembly, part of a SCF (SKP1-cullin-F-box) protein ligase complex. Interacts with ADO3/FKF1, COI1/FBL2, EBF1/FBL6, PP2B10, At3g61590 and At5g49610. In terms of tissue distribution, expressed in young seedlings, roots, leaves, floral stems, inflorescences, and siliques, with a slightly higher level in inflorescence than in other tissues.

It is found in the nucleus. It functions in the pathway protein modification; protein ubiquitination. Its function is as follows. Involved in ubiquitination and subsequent proteasomal degradation of target proteins. Together with CUL1, RBX1 and a F-box protein, it forms a SCF E3 ubiquitin ligase complex. The functional specificity of this complex depends on the type of F-box protein. In the SCF complex, it serves as an adapter that links the F-box protein to CUL1. Plays a role during early flowers reproductive development. The chain is SKP1-like protein 12 (ASK12) from Arabidopsis thaliana (Mouse-ear cress).